A 172-amino-acid chain; its full sequence is UPF0114 protein PMI3225 (172 aa).

Helical transmembrane passes span L15–F35, L57–G77, K108–L128, and L136–L156.

This sequence belongs to the UPF0114 family.

Its subcellular location is the cell membrane. This chain is UPF0114 protein PMI3225, found in Proteus mirabilis (strain HI4320).